The primary structure comprises 257 residues: METIITAISAPIKTLAEWLETTHNVPQAQTMTKWFEILDPNSMSTFQPENLINMVPGPSTPPPEPVSQRAGEGDVLANLVQELMISDEEGDNRPLPTPLVEEDNRPPTPLPEEDDRPLSPLPIRRRQEAQQQPEPSSSSTERPVCLYTFRIGRRCTTRPRQGQYCAAHKRADPMFSENLARSTPLGTEESRPQAKPTPTSQLTDGQQWDENALTAQEANLSSGPKLIRLLGLCKTRQILKPNNTINYDSDLQLFEMD.

2 disordered regions span residues S86 to S119 and S182 to Q206. Over residues P196–Q206 the composition is skewed to polar residues.

This is an uncharacterized protein from Invertebrate iridescent virus 3 (IIV-3).